Reading from the N-terminus, the 40-residue chain is Natriuretic peptide PpNP-a (40 aa).

The propeptide occupies 1-8 (SGSKTANI). The interval 1–40 (SGSKTANIGDGCFGVPIDHIGSTSGMGCGSPRPKPTPGGS) is disordered. A disulfide bridge links Cys12 with Cys28.

This sequence belongs to the natriuretic peptide family. In terms of tissue distribution, expressed by the venom gland.

It localises to the secreted. Snake venom natriuretic peptide that targets both NPR1 and NPR2. Exhibits hypotensive and vasodepressor activities. The protein is Natriuretic peptide PpNP-a of Pseudechis porphyriacus (Red-bellied black snake).